The chain runs to 625 residues: Chaperone protein HtpG (625 aa).

The a; substrate-binding stretch occupies residues 1–330 (MAKQVQNFNA…SSDLSLNVSR (330 aa)). Residues 331–545 (ELLQQDRQVT…SADPSAHMQK (215 aa)) form a b region. Residues 546 to 625 (LMAQMGKEYA…MVQAADSTKH (80 aa)) form a c region.

This sequence belongs to the heat shock protein 90 family. Homodimer.

Its subcellular location is the cytoplasm. In terms of biological role, molecular chaperone. Has ATPase activity. The protein is Chaperone protein HtpG of Bdellovibrio bacteriovorus (strain ATCC 15356 / DSM 50701 / NCIMB 9529 / HD100).